The primary structure comprises 544 residues: Formate--tetrahydrofolate ligase (544 aa).

ATP is bound at residue 63 to 70; sequence TPAGEGKS.

It belongs to the formate--tetrahydrofolate ligase family.

It catalyses the reaction (6S)-5,6,7,8-tetrahydrofolate + formate + ATP = (6R)-10-formyltetrahydrofolate + ADP + phosphate. It participates in one-carbon metabolism; tetrahydrofolate interconversion. The chain is Formate--tetrahydrofolate ligase from Fusobacterium nucleatum subsp. nucleatum (strain ATCC 25586 / DSM 15643 / BCRC 10681 / CIP 101130 / JCM 8532 / KCTC 2640 / LMG 13131 / VPI 4355).